The following is a 477-amino-acid chain: Glycogen synthase (477 aa).

Position 15 (Lys15) interacts with ADP-alpha-D-glucose.

It belongs to the glycosyltransferase 1 family. Bacterial/plant glycogen synthase subfamily.

The catalysed reaction is [(1-&gt;4)-alpha-D-glucosyl](n) + ADP-alpha-D-glucose = [(1-&gt;4)-alpha-D-glucosyl](n+1) + ADP + H(+). The protein operates within glycan biosynthesis; glycogen biosynthesis. Functionally, synthesizes alpha-1,4-glucan chains using ADP-glucose. In Myxococcus xanthus (strain DK1622), this protein is Glycogen synthase.